Reading from the N-terminus, the 248-residue chain is D-xylose 1-dehydrogenase (248 aa).

NAD(+) is bound by residues D42, D68, N91, Y156, K160, V189, and T191. Residue Y156 is the Proton acceptor of the active site.

This sequence belongs to the short-chain dehydrogenases/reductases (SDR) family.

The enzyme catalyses D-xylose + NAD(+) = D-xylono-1,5-lactone + NADH + H(+). Functionally, involved in the degradation of D-xylose. Catalyzes the initial reaction in the xylose utilization pathway by oxydizing D-xylose into D-xylonolactone. Shows some activity with L-arabinose and D-lyxose, but D-xylose is clearly the best substrate. Has no activity with D-ribose, D-glucose, D-galactose or D-mannose. The sequence is that of D-xylose 1-dehydrogenase from Caulobacter vibrioides (strain ATCC 19089 / CIP 103742 / CB 15) (Caulobacter crescentus).